A 287-amino-acid chain; its full sequence is Elongation factor Ts (287 aa).

Positions 80–83 are involved in Mg(2+) ion dislocation from EF-Tu; that stretch reads TDFL.

The protein belongs to the EF-Ts family.

The protein resides in the cytoplasm. Its function is as follows. Associates with the EF-Tu.GDP complex and induces the exchange of GDP to GTP. It remains bound to the aminoacyl-tRNA.EF-Tu.GTP complex up to the GTP hydrolysis stage on the ribosome. This chain is Elongation factor Ts, found in Stutzerimonas stutzeri (strain A1501) (Pseudomonas stutzeri).